A 239-amino-acid chain; its full sequence is Serine protease SplF (239 aa).

The first 36 residues, 1–36 (MNKNIIIKSIGALTILTSITGVGTTMVEGIQQTAKA), serve as a signal peptide directing secretion. Active-site charge relay system residues include histidine 75, aspartate 114, and serine 192.

It belongs to the peptidase S1B family.

The protein resides in the secreted. This Staphylococcus aureus (strain USA300) protein is Serine protease SplF (splF).